Reading from the N-terminus, the 114-residue chain is UPF0342 protein SH1117 (114 aa).

This sequence belongs to the UPF0342 family.

The chain is UPF0342 protein SH1117 from Staphylococcus haemolyticus (strain JCSC1435).